Consider the following 608-residue polypeptide: Chaperone protein HtpG (608 aa).

The tract at residues 1-332 (MQFQTEVNQL…VEDLPLNVSR (332 aa)) is a; substrate-binding. Residues 333-536 (EILQENQILK…KNKLDFAMQQ (204 aa)) form a b region. Positions 537–608 (LLKQMGQEQN…LTKIINKAFS (72 aa)) are c.

The protein belongs to the heat shock protein 90 family. As to quaternary structure, homodimer.

It localises to the cytoplasm. Functionally, molecular chaperone. Has ATPase activity. This is Chaperone protein HtpG from Campylobacter jejuni subsp. doylei (strain ATCC BAA-1458 / RM4099 / 269.97).